We begin with the raw amino-acid sequence, 401 residues long: MREAFICDGIRTPIGRYGGALSSVRADDLAAIPLRELLVRNPRLDAECIDDVILGCANQAGEDNRNVARMATLLAGLPQSVSGTTINRLCGSGLDALGFAARAIKAGDGDLLIAGGVESMSRAPFVMGKAASAFSRQAEMFDTTIGWRFVNPLMAQQFGTDSMPETAENVAELLKISREDQDSFALRSQQRTAKAQSSGILAEEIVPVVLKNKKGVVTEIQHDEHLRPETTLEQLRGLKAPFRANGVITAGNASGVNDGAAALIIASEQMAAAQGLTPRARIVAMATAGVEPRLMGLGPVPATRRVLERAGLSIHDMDVIELNEAFAAQALGVLRELGLPDDAPHVNPNGGAIALGHPLGMSGARLALAASHELHRRNGRYALCTMCIGVGQGIAMILERV.

The active-site Acyl-thioester intermediate is Cys-90. Active-site proton acceptor residues include His-357 and Cys-387.

It belongs to the thiolase-like superfamily. Thiolase family.

It catalyses the reaction succinyl-CoA + acetyl-CoA = 3-oxoadipyl-CoA + CoA. The enzyme catalyses 2,3-didehydroadipoyl-CoA + acetyl-CoA = 3-oxo-5,6-didehydrosuberyl-CoA + CoA. Its pathway is aromatic compound metabolism; phenylacetate degradation. In terms of biological role, catalyzes the thiolytic cleavage of the beta-keto C8 intermediate 3-oxo-5,6-dehydrosuberyl-CoA with CoA to yield the C6 intermediate 2,3-dehydroadipyl-CoA and acetyl-CoA. Besides it catalyzes also the last step of the pathway, in which 3-oxoadipyl-CoA similarly is cleaved to acetyl-CoA and succinyl-CoA. This Escherichia coli (strain K12) protein is 3-oxoadipyl-CoA/3-oxo-5,6-dehydrosuberyl-CoA thiolase (paaJ).